The chain runs to 146 residues: uncharacterized protein (146 aa).

The 133-residue stretch at 9–141 (VADIEKSLRH…FEKSLMKLQH (133 aa)) folds into the HTH marR-type domain. Positions 55-78 (IGELSGKMYLACSTTTDLIDRMQK) form a DNA-binding region, H-T-H motif.

This is an uncharacterized protein from Bacillus subtilis (strain 168).